Here is a 101-residue protein sequence, read N- to C-terminus: Large ribosomal subunit protein bL21 (101 aa).

Belongs to the bacterial ribosomal protein bL21 family. As to quaternary structure, part of the 50S ribosomal subunit. Contacts protein L20.

Functionally, this protein binds to 23S rRNA in the presence of protein L20. The polypeptide is Large ribosomal subunit protein bL21 (Magnetococcus marinus (strain ATCC BAA-1437 / JCM 17883 / MC-1)).